Here is a 322-residue protein sequence, read N- to C-terminus: Ferrochelatase (322 aa).

Fe cation-binding residues include His195 and Glu276.

The protein belongs to the ferrochelatase family.

Its subcellular location is the cytoplasm. The enzyme catalyses heme b + 2 H(+) = protoporphyrin IX + Fe(2+). The protein operates within porphyrin-containing compound metabolism; protoheme biosynthesis; protoheme from protoporphyrin-IX: step 1/1. Catalyzes the ferrous insertion into protoporphyrin IX. The protein is Ferrochelatase of Edwardsiella ictaluri (strain 93-146).